A 614-amino-acid chain; its full sequence is Probable glycerol-3-phosphate dehydrogenase (614 aa).

57-85 (DLVVVGGGSTGAGCALDGATRGLKVALVD) lines the FAD pocket. Residues 595–614 (MECPEEKRHRGERRLPPQEK) form a disordered region. Residues 598–614 (PEEKRHRGERRLPPQEK) are compositionally biased toward basic and acidic residues.

The protein belongs to the FAD-dependent glycerol-3-phosphate dehydrogenase family. Requires FAD as cofactor.

Its subcellular location is the cytoplasm. It carries out the reaction a quinone + sn-glycerol 3-phosphate = dihydroxyacetone phosphate + a quinol. It functions in the pathway polyol metabolism; glycerol degradation via glycerol kinase pathway; glycerone phosphate from sn-glycerol 3-phosphate (anaerobic route): step 1/1. The polypeptide is Probable glycerol-3-phosphate dehydrogenase (Encephalitozoon cuniculi (strain GB-M1) (Microsporidian parasite)).